A 34-amino-acid polypeptide reads, in one-letter code: Mu-conotoxin GS (34 aa).

Intrachain disulfides connect Cys2-Cys14, Cys9-Cys19, and Cys13-Cys27. Residues Pro10 and Pro11 each carry the 4-hydroxyproline modification. At Glu32 the chain carries 4-carboxyglutamate.

Expressed by the venom duct.

The protein localises to the secreted. Its function is as follows. Mu-conotoxins block voltage-gated sodium channels (Nav). No effect was observed upon injections into mice and goldfish (25 ug). In Conus geographus (Geography cone), this protein is Mu-conotoxin GS.